A 1172-amino-acid chain; its full sequence is Lysylphosphatidylglycerol biosynthesis bifunctional protein LysX (1172 aa).

The interval 1 to 34 is disordered; the sequence is MGLHLTVPGLRRDGRGVQSNSHDTSSKTTADISR. The segment at 1–663 is phosphatidylglycerol lysyltransferase; that stretch reads MGLHLTVPGL…LLHHDGSAPD (663 aa). A compositionally biased stretch (polar residues) spans 17 to 31; the sequence is VQSNSHDTSSKTTAD. 7 helical membrane-spanning segments follow: residues 80 to 100, 122 to 142, 146 to 166, 177 to 197, 214 to 234, 272 to 292, and 612 to 632; these read VPAA…LASV, FPDT…ALTA, IAWL…AAEI, FGEN…VLGY, AVWL…VELF, AIFG…LFLS, and VIPR…LPFS. The segment at 664–1172 is lysine--tRNA ligase; the sequence is VSGLRQVGLT…TLPFPLAKPH (509 aa). Positions 726–804 form a DNA-binding region, OB; the sequence is VSVSGRIMRI…SLIVSGWRLI (79 aa). Residues Asp-1084 and Glu-1091 each contribute to the Mg(2+) site.

In the N-terminal section; belongs to the LPG synthetase family. It in the C-terminal section; belongs to the class-II aminoacyl-tRNA synthetase family. It depends on Mg(2+) as a cofactor.

It is found in the cell membrane. The enzyme catalyses tRNA(Lys) + L-lysine + ATP = L-lysyl-tRNA(Lys) + AMP + diphosphate. It carries out the reaction L-lysyl-tRNA(Lys) + a 1,2-diacyl-sn-glycero-3-phospho-(1'-sn-glycerol) = a 1,2-diacyl-sn-glycero-3-phospho-1'-(3'-O-L-lysyl)-sn-glycerol + tRNA(Lys). Functionally, catalyzes the production of L-lysyl-tRNA(Lys)transfer and the transfer of a lysyl group from L-lysyl-tRNA(Lys) to membrane-bound phosphatidylglycerol (PG), which produces lysylphosphatidylglycerol (LPG), one of the components of the bacterial membrane with a positive net charge. LPG synthesis contributes to the resistance to cationic antimicrobial peptides (CAMPs) and likely protects M.tuberculosis against the CAMPs produced by competiting microorganisms (bacteriocins). In fact, the modification of anionic phosphatidylglycerol with positively charged L-lysine results in repulsion of the peptides. The sequence is that of Lysylphosphatidylglycerol biosynthesis bifunctional protein LysX (lysX) from Mycobacterium bovis (strain ATCC BAA-935 / AF2122/97).